The following is an 837-amino-acid chain: Vacuolar membrane protease (837 aa).

Over 1–36 (MSEEEVHDTSSEASEVFTNQPNAFVRGVRSIFGYRK) the chain is Cytoplasmic. Residues 37–57 (TSLTLFVILTIVVTAGLSFYD) form a helical membrane-spanning segment. Residues 58–355 (NSLELTIELP…FATPISALAR (298 aa)) lie on the Vacuolar side of the membrane. An N-linked (GlcNAc...) asparagine glycan is attached at asparagine 143. Zn(2+) contacts are provided by histidine 157 and aspartate 169. Glutamate 201 serves as the catalytic Proton acceptor. Residues glutamate 202, glutamate 227, and histidine 299 each coordinate Zn(2+). Residues 356–376 (VNLVLLVLFPVVSTPLLFVIV) traverse the membrane as a helical segment. Residues 377 to 384 (KYKKWKLR) are Cytoplasmic-facing. Residues 385–405 (VTNFLGVPLAMGLAVAVGQVG) form a helical membrane-spanning segment. The Vacuolar portion of the chain corresponds to 406 to 415 (NPMLVSSHPM). Residues 416 to 436 (MVVATTTSIVVLVYYVVLNGV) traverse the membrane as a helical segment. At 437–446 (DWVNTSSDQK) the chain is on the cytoplasmic side. Residues 447 to 467 (LVTMIEVSFVYWVVLVYVTWS) form a helical membrane-spanning segment. The Vacuolar segment spans residues 468–474 (GGDHTGE). The chain crosses the membrane as a helical span at residues 475–495 (FGVTVLFFVQASTSLLGLIGW). The Cytoplasmic portion of the chain corresponds to 496-539 (TFTRVRGGDEPLLSGEEERYGTEDERDTEKPLVEHNYDWSLQYL). The chain crosses the membrane as a helical span at residues 540–560 (LIVPVSSLVVYNSGWLVLEGV). N-linked (GlcNAc...) asparagine glycosylation is present at asparagine 561. Residues 561 to 572 (NKTVQESLASEH) lie on the Vacuolar side of the membrane. Residues 573 to 593 (LIYWIVVVFSQFLVLPVVPFI) traverse the membrane as a helical segment. The Cytoplasmic portion of the chain corresponds to 594–598 (TKFNR). The chain crosses the membrane as a helical span at residues 599 to 619 (YIVLGLSVVVVVGVLMSMAVH). The Vacuolar portion of the chain corresponds to 620-837 (PFNQGSPMKL…LVGVVKHVDV (218 aa)). Residue asparagine 689 is glycosylated (N-linked (GlcNAc...) asparagine).

This sequence belongs to the peptidase M28 family. The cofactor is Zn(2+).

Its subcellular location is the vacuole membrane. Functionally, may be involved in vacuolar sorting and osmoregulation. The protein is Vacuolar membrane protease of Candida albicans (strain SC5314 / ATCC MYA-2876) (Yeast).